Consider the following 154-residue polypeptide: Ribonuclease H (154 aa).

Positions 3 to 144 (ELPVVSIFTD…ADQLARDGVA (142 aa)) constitute an RNase H type-1 domain. Mg(2+)-binding residues include D12, E50, D72, and D136.

It belongs to the RNase H family. As to quaternary structure, monomer. Requires Mg(2+) as cofactor.

It localises to the cytoplasm. It catalyses the reaction Endonucleolytic cleavage to 5'-phosphomonoester.. In terms of biological role, endonuclease that specifically degrades the RNA of RNA-DNA hybrids. The sequence is that of Ribonuclease H from Bradyrhizobium sp. (strain ORS 278).